A 315-amino-acid polypeptide reads, in one-letter code: Protein OPG185 (315 aa).

The signal sequence occupies residues 1–16 (MTRLPILLLLISLVYA). The Ig-like V-type domain occupies 17–121 (TPFPQTSKKI…NDTDKVDYEE (105 aa)). At 17–279 (TPFPQTSKKI…SNYKTKDFVE (263 aa)) the chain is on the virion surface side. An intrachain disulfide couples C34 to C103. 4 N-linked (GlcNAc...) asparagine; by host glycosylation sites follow: N37, N69, N112, and N161. Positions 193 to 202 (NTVSASSGES) are enriched in polar residues. Residues 193–213 (NTVSASSGESTTDETPEPITD) are disordered. A glycan (N-linked (GlcNAc...) asparagine; by host) is linked at N254. Residues 280-303 (IFGITALIILSAVAIFCITYYIYN) form a helical membrane-spanning segment. Residues 304–315 (KRSRKYKTENKV) are Intravirion-facing.

This sequence belongs to the orthopoxvirus OPG185 family. As to quaternary structure, heterodimerizes with OPG040. The heterodimer OPG185-OPG040 interacts with components of the entry fusion complex OPG143 and OPG094. Heterodimer with C3/VPC protein; disulfide-linked. In terms of processing, glycosylated; contains phosphate and sulfate-substituted glycans. O-glycosylation is required for hemagglutination and hemadsorption activities of infected cell membranes.

Its subcellular location is the virion membrane. The protein resides in the host membrane. Prevents cell to cell fusion by interacting with and directing the viral OPG040 protein on the host plasma membrane. The OPG185-OPG040 complex associates with components of the entry fusion complex (EFC) presumably to avoid superinfection and syncytium formation. Via its interaction with C3/VCP protein, protects the infected cell and probably also the extracellular enveloped virus from complement attack. In Homo sapiens (Human), this protein is Protein OPG185 (OPG185).